We begin with the raw amino-acid sequence, 473 residues long: Ribulose bisphosphate carboxylase large chain (473 aa).

Positions 116 and 166 each coordinate substrate. The active-site Proton acceptor is the Lys168. Lys170 contacts substrate. Residues Lys194, Asp196, and Glu197 each coordinate Mg(2+). The residue at position 194 (Lys194) is an N6-carboxylysine. Catalysis depends on His287, which acts as the Proton acceptor. The substrate site is built by Arg288, His320, and Ser372.

Belongs to the RuBisCO large chain family. Type I subfamily. As to quaternary structure, heterohexadecamer of 8 large chains and 8 small chains. Requires Mg(2+) as cofactor.

The catalysed reaction is 2 (2R)-3-phosphoglycerate + 2 H(+) = D-ribulose 1,5-bisphosphate + CO2 + H2O. It catalyses the reaction D-ribulose 1,5-bisphosphate + O2 = 2-phosphoglycolate + (2R)-3-phosphoglycerate + 2 H(+). In terms of biological role, ruBisCO catalyzes two reactions: the carboxylation of D-ribulose 1,5-bisphosphate, the primary event in carbon dioxide fixation, as well as the oxidative fragmentation of the pentose substrate. Both reactions occur simultaneously and in competition at the same active site. This Methylococcus capsulatus (strain ATCC 33009 / NCIMB 11132 / Bath) protein is Ribulose bisphosphate carboxylase large chain.